The primary structure comprises 198 residues: MICOS complex subunit Mic26 (198 aa).

The signal sequence occupies residues 1–23; sequence MFKVIQRSVGPASLSLLTFRVYA. N-linked (GlcNAc...) asparagine glycosylation occurs at N63. Residues 108 to 128 form a helical membrane-spanning segment; the sequence is PGFFPRLGVIGFAGFVGLLFA.

Belongs to the apolipoprotein O/MICOS complex subunit Mic27 family. In terms of assembly, component of the mitochondrial contact site and cristae organizing system (MICOS) complex, composed of at least MICOS10/MIC10, CHCHD3/MIC19, CHCHD6/MIC25, APOOL/MIC27, IMMT/MIC60, APOO/MIC23/MIC26 and MICOS13/MIC13. This complex was also known under the names MINOS or MitOS complex. The MICOS complex associates with mitochondrial outer membrane proteins SAMM50, MTX1 and MTX2 (together described as components of the mitochondrial outer membrane sorting assembly machinery (SAM) complex) and DNAJC11, mitochondrial inner membrane protein TMEM11 and with HSPA9. The MICOS and SAM complexes together with DNAJC11 are part of a large protein complex spanning both membranes termed the mitochondrial intermembrane space bridging (MIB) complex. Interacts with IMMT/MIC60. Interacts with MICOS10/MIC10 and APOOL/MIC27.

The protein resides in the mitochondrion inner membrane. It is found in the mitochondrion. The protein localises to the endoplasmic reticulum membrane. It localises to the golgi apparatus membrane. Functionally, component of the MICOS complex, a large protein complex of the mitochondrial inner membrane that plays crucial roles in the maintenance of crista junctions, inner membrane architecture, and formation of contact sites to the outer membrane. Plays a crucial role in crista junction formation and mitochondrial function. Can induce cardiac lipotoxicity by enhancing mitochondrial respiration and fatty acid metabolism in cardiac myoblasts. Promotes cholesterol efflux from macrophage cells. Detected in HDL, LDL and VLDL. Secreted by a microsomal triglyceride transfer protein (MTTP)-dependent mechanism, probably as a VLDL-associated protein that is subsequently transferred to HDL. The polypeptide is MICOS complex subunit Mic26 (Apoo) (Mus musculus (Mouse)).